Here is a 244-residue protein sequence, read N- to C-terminus: NAD(P)H-quinone oxidoreductase subunit K (244 aa).

Residues cysteine 60, cysteine 61, cysteine 125, and cysteine 156 each coordinate [4Fe-4S] cluster.

This sequence belongs to the complex I 20 kDa subunit family. NDH-1 can be composed of about 15 different subunits; different subcomplexes with different compositions have been identified which probably have different functions. Requires [4Fe-4S] cluster as cofactor.

Its subcellular location is the cellular thylakoid membrane. It catalyses the reaction a plastoquinone + NADH + (n+1) H(+)(in) = a plastoquinol + NAD(+) + n H(+)(out). The catalysed reaction is a plastoquinone + NADPH + (n+1) H(+)(in) = a plastoquinol + NADP(+) + n H(+)(out). In terms of biological role, NDH-1 shuttles electrons from an unknown electron donor, via FMN and iron-sulfur (Fe-S) centers, to quinones in the respiratory and/or the photosynthetic chain. The immediate electron acceptor for the enzyme in this species is believed to be plastoquinone. Couples the redox reaction to proton translocation, and thus conserves the redox energy in a proton gradient. Cyanobacterial NDH-1 also plays a role in inorganic carbon-concentration. This chain is NAD(P)H-quinone oxidoreductase subunit K, found in Prochlorococcus marinus (strain AS9601).